A 427-amino-acid chain; its full sequence is Aspartate aminotransferase, mitochondrial (427 aa).

Residues 1-26 (MALLKSRLLVGVARCQPCLAAVQGRA) constitute a mitochondrion transit peptide. Positions 62, 159, and 212 each coordinate substrate. An N6-(pyridoxal phosphate)lysine modification is found at lysine 276. Arginine 404 contributes to the substrate binding site.

Belongs to the class-I pyridoxal-phosphate-dependent aminotransferase family. In terms of assembly, homodimer. Pyridoxal 5'-phosphate is required as a cofactor.

The protein localises to the mitochondrion matrix. It catalyses the reaction L-aspartate + 2-oxoglutarate = oxaloacetate + L-glutamate. It carries out the reaction L-kynurenine + 2-oxoglutarate = kynurenate + L-glutamate + H2O. Its function is as follows. Catalyzes the irreversible transamination of the L-tryptophan metabolite L-kynurenine to form kynurenic acid (KA). As a member of the malate-aspartate shuttle, it has a key role in the intracellular NAD(H) redox balance. Is important for metabolite exchange between mitochondria and cytosol, and for amino acid metabolism. The polypeptide is Aspartate aminotransferase, mitochondrial (got2) (Xenopus tropicalis (Western clawed frog)).